The primary structure comprises 92 residues: Small integral membrane protein 12 (92 aa).

The chain crosses the membrane as a helical span at residues 15–34; sequence YVTFPVAFVVGAVGYHLEWF.

The protein belongs to the SMIM12 family.

The protein localises to the membrane. The polypeptide is Small integral membrane protein 12 (SMIM12) (Nomascus leucogenys (Northern white-cheeked gibbon)).